The following is a 414-amino-acid chain: uncharacterized protein (414 aa).

An N-terminal signal peptide occupies residues 1-16 (MRVILLLAFLISLTEC). One can recognise a Myb-like 1 domain in the interval 20–59 (SEDLALYDLVEEVGVNFYEWFDIPRDASSNQVKKAYRKLT). Residues 35–99 (NFYEWFDIPR…ELREKYDNVL (65 aa)) form the J domain. A helical transmembrane segment spans residues 125 to 145 (ILVLLFIGTIAHYLMMWAAYF). The segment at 211–234 (MTPKEVEPEEPTEEELAQQRRQQR) is disordered. The span at 217-226 (EPEEPTEEEL) shows a compositional bias: acidic residues. One can recognise a Myb-like 2 domain in the interval 274-320 (AQKQSGATWTPDELASLVRLSTEKYPAGTPNRWEQMGRVLNRSAEDV). An SANT domain is found at 352–407 (KSEDDWSQAEQKAFETALQKYPKGTDERWERISEEIGSKTKKQVMVRFKQLAEMIR).

It is found in the nucleus membrane. This is an uncharacterized protein from Caenorhabditis elegans.